The sequence spans 128 residues: Small ribosomal subunit protein uS9 (128 aa).

This sequence belongs to the universal ribosomal protein uS9 family.

In Cytophaga hutchinsonii (strain ATCC 33406 / DSM 1761 / CIP 103989 / NBRC 15051 / NCIMB 9469 / D465), this protein is Small ribosomal subunit protein uS9.